Reading from the N-terminus, the 983-residue chain is Protein CLASP-3 (983 aa).

Disordered regions lie at residues 356–393 and 666–690; these read YPNR…TQKA and SNNI…QKES. Over residues 359 to 372 the composition is skewed to low complexity; it reads RPGSRTRTSSITST. One copy of the HEAT repeat lies at 918-956; sequence ITPTIIKAYQSTSSTVRKTVVYCLVAMVNRVGEQRMTPH.

Belongs to the CLASP family.

The protein localises to the cytoplasm. Its subcellular location is the cytoskeleton. Its function is as follows. Microtubule plus-end tracking protein that promotes the stabilization of dynamic microtubules. The protein is Protein CLASP-3 (cls-3) of Caenorhabditis elegans.